The sequence spans 303 residues: Foldase protein PrsA (303 aa).

Residues 1-20 (MMKKWLLAAASLLMVVTLAG) form the signal peptide. A lipid anchor (N-palmitoyl cysteine) is attached at cysteine 21. Cysteine 21 carries the S-diacylglycerol cysteine lipid modification. Residues 137 to 233 (EPKVEVQHIL…YGYHVIRMIK (97 aa)) enclose the PpiC domain.

This sequence belongs to the PrsA family.

The protein resides in the cell membrane. It carries out the reaction [protein]-peptidylproline (omega=180) = [protein]-peptidylproline (omega=0). Plays a major role in protein secretion by helping the post-translocational extracellular folding of several secreted proteins. This chain is Foldase protein PrsA, found in Latilactobacillus sakei subsp. sakei (strain 23K) (Lactobacillus sakei subsp. sakei).